The chain runs to 206 residues: Uridine kinase (206 aa).

Residue glycine 11 to serine 18 participates in ATP binding.

It belongs to the uridine kinase family.

The protein localises to the cytoplasm. The enzyme catalyses uridine + ATP = UMP + ADP + H(+). The catalysed reaction is cytidine + ATP = CMP + ADP + H(+). The protein operates within pyrimidine metabolism; CTP biosynthesis via salvage pathway; CTP from cytidine: step 1/3. It participates in pyrimidine metabolism; UMP biosynthesis via salvage pathway; UMP from uridine: step 1/1. The sequence is that of Uridine kinase from Clostridium botulinum (strain Kyoto / Type A2).